We begin with the raw amino-acid sequence, 484 residues long: Ribosomal RNA small subunit methyltransferase F (484 aa).

Residues 126 to 132, E150, D177, and D195 contribute to the S-adenosyl-L-methionine site; that span reads AAAPGSK. The active-site Nucleophile is C248.

It belongs to the class I-like SAM-binding methyltransferase superfamily. RsmB/NOP family.

The protein localises to the cytoplasm. The catalysed reaction is cytidine(1407) in 16S rRNA + S-adenosyl-L-methionine = 5-methylcytidine(1407) in 16S rRNA + S-adenosyl-L-homocysteine + H(+). In terms of biological role, specifically methylates the cytosine at position 1407 (m5C1407) of 16S rRNA. The polypeptide is Ribosomal RNA small subunit methyltransferase F (Pectobacterium atrosepticum (strain SCRI 1043 / ATCC BAA-672) (Erwinia carotovora subsp. atroseptica)).